A 216-amino-acid chain; its full sequence is Probable ubiquitin-conjugating enzyme E2 ECU01_1010 (216 aa).

Over residues 1-10 the composition is skewed to basic residues; the sequence is MFKPSAHRRL. The segment at 1 to 29 is disordered; sequence MFKPSAHRRLPREDDIIQEDDEDGPLWPS. The region spanning 29–196 is the UBC core domain; the sequence is SALRRLSNEE…VIRIAREEDE (168 aa). The active-site Glycyl thioester intermediate is Cys-120.

The protein belongs to the ubiquitin-conjugating enzyme family.

The catalysed reaction is S-ubiquitinyl-[E1 ubiquitin-activating enzyme]-L-cysteine + [E2 ubiquitin-conjugating enzyme]-L-cysteine = [E1 ubiquitin-activating enzyme]-L-cysteine + S-ubiquitinyl-[E2 ubiquitin-conjugating enzyme]-L-cysteine.. The protein operates within protein modification; protein ubiquitination. Functionally, catalyzes the covalent attachment of ubiquitin to other proteins so as to signal them for selective protein degradation. Involved in the formation of multiubiquitin chains. The sequence is that of Probable ubiquitin-conjugating enzyme E2 ECU01_1010 from Encephalitozoon cuniculi (strain GB-M1) (Microsporidian parasite).